The sequence spans 3415 residues: Genome polyprotein (3415 aa).

The disordered stretch occupies residues 1 to 29 (MMTTSKGKGGGPPRRKLKVTANKSRPATS). Residues 1–96 (MMTTSKGKGG…LHMRGRRRSG (96 aa)) are Cytoplasmic-facing. A propeptide spans 95-115 (SGVDWTWIFLTMALMTMAMAT) (ER anchor for the capsid protein C, removed in mature form by serine protease NS3). Residues 97–117 (VDWTWIFLTMALMTMAMATTI) form a helical membrane-spanning segment. The Extracellular portion of the chain corresponds to 118-243 (HRDREGYMVM…RVEGWMWKNK (126 aa)). The N-linked (GlcNAc...) asparagine; by host glycan is linked to N142. Residues 244–260 (LLTAAIVALAWLMVDSW) traverse the membrane as a helical segment. A topological domain (cytoplasmic) is located at residue M261. The helical transmembrane segment at 262 to 278 (ARVTVILLALSLGPVYA) threads the bilayer. The Extracellular segment spans residues 279 to 726 (TRCTHLENRD…HTVLGGAFNT (448 aa)). 6 disulfides stabilise this stretch: C281-C308, C338-C394, C338-C399, C352-C383, C370-C394, and C370-C399. The tract at residues 376–389 (DRGWGNHCGFFGKG) is fusion peptide. A glycan (N-linked (GlcNAc...) asparagine; by host) is linked at N432. 2 cysteine pairs are disulfide-bonded: C464–C568 and C585–C617. Residues 727 to 747 (LFGGVGFIPKMLLGVALVWLG) form a helical membrane-spanning segment. The Cytoplasmic segment spans residues 748 to 754 (LNARNPT). The chain crosses the membrane as a helical span at residues 755–775 (MSMTFLAVGALTLMMTMGVGA). Residues 776 to 1187 (DYGCAIDPER…LVRVEEIVRY (412 aa)) are Extracellular-facing. Intrachain disulfides connect C779–C790, C830–C920, C955–C1000, C1057–C1106, C1068–C1090, and C1089–C1093. N860, N983, and N999 each carry an N-linked (GlcNAc...) asparagine; by host glycan. The helical transmembrane segment at 1188 to 1208 (VIAVGVTFHLELGPETMVLVM) threads the bilayer. Residues 1209–1233 (LQAVFNMRTCYLMGFLVKRVITTRE) are Cytoplasmic-facing. A helical membrane pass occupies residues 1234–1253 (VVTVYFLLLVLEMGIPEMNF). G1254 is a topological domain (lumenal). The chain crosses the membrane as a helical span at residues 1255-1275 (HLWEWADALAMGLLIIKASAM). Topologically, residues 1276 to 1292 (EDRRGLGFLLAGLMTQR) are cytoplasmic. The helical transmembrane segment at 1293-1313 (HLVAVHHGLMVFLTVALAVVG) threads the bilayer. Topologically, residues 1314–1327 (RNIYNGQKERKGLC) are lumenal. A helical transmembrane segment spans residues 1328–1348 (FTVPLASLLGGSGSGLRMLAL). Over 1349-1359 (WECLGGRGRRS) the chain is Cytoplasmic. Residues 1360 to 1378 (LSEPLTVVGVMLAMASGLL) traverse the membrane as a helical segment. At 1379-1382 (RHSS) the chain is on the lumenal side. A helical transmembrane segment spans residues 1383–1403 (QEALLALSAGSFLILMLILGT). Residues 1404–1452 (RRLQLTAEWAGVVEWNPELVNEGGEVSLKVRQDAMGNLHLTEVEREERR) lie on the Cytoplasmic side of the membrane. Residues 1410-1449 (AEWAGVVEWNPELVNEGGEVSLKVRQDAMGNLHLTEVERE) are interacts with and activates NS3 protease. The segment at residues 1453–1473 (LALWLVFGLLASAYHWSGILV) is an intramembrane region (helical). At 1474–2163 (TMGAWTVYEL…AERDAPEAML (690 aa)) the chain is on the cytoplasmic side. Residues 1490 to 1669 (TDLVFSGQLP…NVEKSRPEMP (180 aa)) enclose the Peptidase S7 domain. Residues H1543, D1567, and S1627 each act as charge relay system; for serine protease NS3 activity in the active site. Residues 1675–1832 (GKWTSKGSIT…ESKGAIVSEE (158 aa)) enclose the Helicase ATP-binding domain. 1688–1695 (MHPGSGKT) is a binding site for ATP. The short motif at 1780 to 1783 (DEAH) is the DEAH box element. The Helicase C-terminal domain maps to 1842-2001 (DGFDWITEFE…TVRGPVATFY (160 aa)). Position 1884 is an N6-acetyllysine; by host (K1884). A helical transmembrane segment spans residues 2164 to 2184 (TLLEVAVLGIATLGVVWCFIV). The Lumenal portion of the chain corresponds to 2185-2190 (RTSVSR). An intramembrane region (helical) is located at residues 2191–2210 (MVLGTLVLAVALILLWLGGM). Residue D2211 is a topological domain, lumenal. A helical membrane pass occupies residues 2212–2232 (YGTMAGVALIFYLLLTVLQPE). The Cytoplasmic segment spans residues 2233–2243 (PGKQRSGEDNR). The helical transmembrane segment at 2244–2264 (LAFLLIGLGSVVGLVAANELG) threads the bilayer. Over 2265 to 2300 (YLEQTKTDISGLFRREDQGGMVWDAWTNIDIQPARS) the chain is Lumenal. The segment at residues 2301-2321 (WGTYVLIVSLFTPYMLHQLQT) is an intramembrane region (helical). Residues 2322–2344 (KIQRLVNSSVAAGTQAMRDLGGG) lie on the Lumenal side of the membrane. The segment at residues 2345–2365 (TPFFGVAGHVVALGVTSLVGA) is an intramembrane region (helical). Topologically, residues 2366-2369 (TPTS) are lumenal. A helical transmembrane segment spans residues 2370–2390 (LALGVALAALHLAVVTSGLEA). The Cytoplasmic segment spans residues 2391–2433 (ELTQRAHRAFFSAMVKNPMVDGEIINPIPDGDPKPALYERKMS). The chain crosses the membrane as a helical span at residues 2434 to 2454 (LFLAIGLCIAAVALNRTAAAM). The Lumenal segment spans residues 2455 to 2479 (TEAGAVAVAALGQLLRPEEESWWTM). A helical transmembrane segment spans residues 2480–2500 (PMACGMAGLVRGSLWGLLPVL). The Cytoplasmic portion of the chain corresponds to 2501-3415 (HRIWLRTQGA…WELKLESSII (915 aa)). The 265-residue stretch at 2513 to 2777 (GGAEGSTLGD…EIDLGTGTRC (265 aa)) folds into the mRNA cap 0-1 NS5-type MT domain. Position 2568 (S2568) interacts with S-adenosyl-L-methionine. S2568 carries the phosphoserine modification. The active-site For 2'-O-MTase activity is K2573. 6 residues coordinate S-adenosyl-L-methionine: G2598, W2599, T2616, I2617, D2643, and V2644. D2658 serves as the catalytic For 2'-O-MTase activity. Position 2659 (I2659) interacts with S-adenosyl-L-methionine. Active-site for 2'-O-MTase activity residues include K2695 and E2731. The interval 2731–2735 (EMYYS) is interaction with host SCRIB. Y2733 contacts S-adenosyl-L-methionine. Residues E2951, H2955, C2960, and C2963 each coordinate Zn(2+). The region spanning 3041-3190 (GKLYADDTAG…KPIDDRFGKA (150 aa)) is the RdRp catalytic domain. Positions 3225, 3241, and 3360 each coordinate Zn(2+).

It in the N-terminal section; belongs to the class I-like SAM-binding methyltransferase superfamily. mRNA cap 0-1 NS5-type methyltransferase family. Homodimer. Interacts (via N-terminus) with host EXOC1 (via C-terminus); this interaction results in EXOC1 degradation through the proteasome degradation pathway. As to quaternary structure, forms heterodimers with envelope protein E in the endoplasmic reticulum and Golgi. In terms of assembly, homodimer; in the endoplasmic reticulum and Golgi. Forms homodimers as well as homohexamers. NS1 may interact with NS4A. As to quaternary structure, forms a heterodimer with serine protease NS3. May form homooligomers. In terms of assembly, forms a heterodimer with NS2B. Interacts with NS4B. Interacts with unphosphorylated RNA-directed RNA polymerase NS5; this interaction stimulates RNA-directed RNA polymerase NS5 guanylyltransferase activity. Interacts with serine protease NS3. As to quaternary structure, interacts with host STAT2; this interaction inhibits the phosphorylation of the latter, and, when all viral proteins are present (polyprotein), targets STAT2 for degradation. Post-translationally, specific enzymatic cleavages in vivo yield mature proteins. Cleavages in the lumen of endoplasmic reticulum are performed by host signal peptidase, whereas cleavages in the cytoplasmic side are performed by serine protease NS3. Signal cleavage at the 2K-4B site requires a prior NS3 protease-mediated cleavage at the 4A-2K site. Cleaved in post-Golgi vesicles by a host furin, releasing the mature small envelope protein M, and peptide pr. This cleavage is incomplete as up to 30% of viral particles still carry uncleaved prM. In terms of processing, N-glycosylated. Post-translationally, N-glycosylated. The excreted form is glycosylated and this is required for efficient secretion of the protein from infected cells. Acetylated by host KAT5. Acetylation modulates NS3 RNA-binding and unwinding activities and plays an important positive role for viral replication. In terms of processing, phosphorylated on serines residues. This phosphorylation may trigger NS5 nuclear localization.

The protein resides in the virion. Its subcellular location is the host nucleus. It is found in the host cytoplasm. It localises to the host perinuclear region. The protein localises to the secreted. The protein resides in the virion membrane. Its subcellular location is the host endoplasmic reticulum membrane. It catalyses the reaction Selective hydrolysis of -Xaa-Xaa-|-Yaa- bonds in which each of the Xaa can be either Arg or Lys and Yaa can be either Ser or Ala.. It carries out the reaction RNA(n) + a ribonucleoside 5'-triphosphate = RNA(n+1) + diphosphate. The catalysed reaction is a ribonucleoside 5'-triphosphate + H2O = a ribonucleoside 5'-diphosphate + phosphate + H(+). The enzyme catalyses ATP + H2O = ADP + phosphate + H(+). It catalyses the reaction a 5'-end (5'-triphosphoguanosine)-ribonucleoside in mRNA + S-adenosyl-L-methionine = a 5'-end (N(7)-methyl 5'-triphosphoguanosine)-ribonucleoside in mRNA + S-adenosyl-L-homocysteine. It carries out the reaction a 5'-end (N(7)-methyl 5'-triphosphoguanosine)-ribonucleoside in mRNA + S-adenosyl-L-methionine = a 5'-end (N(7)-methyl 5'-triphosphoguanosine)-(2'-O-methyl-ribonucleoside) in mRNA + S-adenosyl-L-homocysteine + H(+). Functionally, plays a role in virus budding by binding to the cell membrane and gathering the viral RNA into a nucleocapsid that forms the core of a mature virus particle. During virus entry, may induce genome penetration into the host cytoplasm after hemifusion induced by the surface proteins. Can migrate to the cell nucleus where it modulates host functions. Inhibits RNA silencing by interfering with host Dicer. In terms of biological role, prevents premature fusion activity of envelope proteins in trans-Golgi by binding to envelope protein E at pH6.0. After virion release in extracellular space, gets dissociated from E dimers. Its function is as follows. Acts as a chaperone for envelope protein E during intracellular virion assembly by masking and inactivating envelope protein E fusion peptide. prM is the only viral peptide matured by host furin in the trans-Golgi network probably to avoid catastrophic activation of the viral fusion activity in acidic Golgi compartment prior to virion release. prM-E cleavage is inefficient, and many virions are only partially matured. These uncleaved prM would play a role in immune evasion. Functionally, may play a role in virus budding. Exerts cytotoxic effects by activating a mitochondrial apoptotic pathway through M ectodomain. May display a viroporin activity. Binds to host cell surface receptor and mediates fusion between viral and cellular membranes. Envelope protein is synthesized in the endoplasmic reticulum in the form of heterodimer with protein prM. They play a role in virion budding in the ER, and the newly formed immature particle is covered with 60 spikes composed of heterodimer between precursor prM and envelope protein E. The virion is transported to the Golgi apparatus where the low pH causes dissociation of PrM-E heterodimers and formation of E homodimers. prM-E cleavage is inefficient, and many virions are only partially matured. These uncleaved prM would play a role in immune evasion. In terms of biological role, involved in immune evasion, pathogenesis and viral replication. Once cleaved off the polyprotein, is targeted to three destinations: the viral replication cycle, the plasma membrane and the extracellular compartment. Essential for viral replication. Required for formation of the replication complex and recruitment of other non-structural proteins to the ER-derived membrane structures. Excreted as a hexameric lipoparticle that plays a role against host immune response. Antagonizing the complement function. Binds to the host macrophages and dendritic cells. Inhibits signal transduction originating from Toll-like receptor 3 (TLR3). Its function is as follows. Component of the viral RNA replication complex that functions in virion assembly and antagonizes the host immune response. Functionally, required cofactor for the serine protease function of NS3. May have membrane-destabilizing activity and form viroporins. Displays three enzymatic activities: serine protease, NTPase and RNA helicase. NS3 serine protease, in association with NS2B, performs its autocleavage and cleaves the polyprotein at dibasic sites in the cytoplasm: C-prM, NS2A-NS2B, NS2B-NS3, NS3-NS4A, NS4A-2K and NS4B-NS5. NS3 RNA helicase binds RNA and unwinds dsRNA in the 3' to 5' direction. In terms of biological role, regulates the ATPase activity of the NS3 helicase activity. NS4A allows NS3 helicase to conserve energy during unwinding. Its function is as follows. Functions as a signal peptide for NS4B and is required for the interferon antagonism activity of the latter. Functionally, induces the formation of ER-derived membrane vesicles where the viral replication takes place. Inhibits interferon (IFN)-induced host STAT1 phosphorylation and nuclear translocation, thereby preventing the establishment of cellular antiviral state by blocking the IFN-alpha/beta pathway. Inhibits STAT2 translocation in the nucleus after IFN-alpha treatment. Replicates the viral (+) and (-) RNA genome, and performs the capping of genomes in the cytoplasm. NS5 methylates viral RNA cap at guanine N-7 and ribose 2'-O positions. Besides its role in RNA genome replication, also prevents the establishment of cellular antiviral state by blocking the interferon-alpha/beta (IFN-alpha/beta) signaling pathway. Inhibits host TYK2 and STAT2 phosphorylation, thereby preventing activation of JAK-STAT signaling pathway. The chain is Genome polyprotein from Tick-borne powassan virus (strain LB) (POWV).